Consider the following 561-residue polypeptide: Glutamine--tRNA ligase (561 aa).

The 'HIGH' region motif lies at 34 to 44 (PEPNGYLHIGH). Residues 35 to 37 (EPN) and 41 to 47 (HIGHAKS) each bind ATP. L-glutamine is bound by residues aspartate 67 and tyrosine 212. ATP is bound by residues threonine 231, 261–262 (RL), and 269–271 (MSK). The short motif at 268–272 (VMSKR) is the 'KMSKS' region element.

Belongs to the class-I aminoacyl-tRNA synthetase family. Monomer.

The protein resides in the cytoplasm. The catalysed reaction is tRNA(Gln) + L-glutamine + ATP = L-glutaminyl-tRNA(Gln) + AMP + diphosphate. The polypeptide is Glutamine--tRNA ligase (Idiomarina loihiensis (strain ATCC BAA-735 / DSM 15497 / L2-TR)).